The sequence spans 480 residues: Trigger factor (480 aa).

In terms of domain architecture, PPIase FKBP-type spans 161–249 (GDRLLITGKF…VVEVLKEQLP (89 aa)). Residues 426-480 (TEEPVEKEAEEKNEEFAIDHEVLPTKDHDAIPAAKYDDNTPKGAETEDKQEKDKD) form a disordered region. Residues 429–480 (PVEKEAEEKNEEFAIDHEVLPTKDHDAIPAAKYDDNTPKGAETEDKQEKDKD) show a composition bias toward basic and acidic residues.

The protein belongs to the FKBP-type PPIase family. Tig subfamily.

Its subcellular location is the cytoplasm. The catalysed reaction is [protein]-peptidylproline (omega=180) = [protein]-peptidylproline (omega=0). In terms of biological role, involved in protein export. Acts as a chaperone by maintaining the newly synthesized protein in an open conformation. Functions as a peptidyl-prolyl cis-trans isomerase. The sequence is that of Trigger factor from Rhodopirellula baltica (strain DSM 10527 / NCIMB 13988 / SH1).